The sequence spans 869 residues: Retrovirus-related Pol polyprotein from type-1 retrotransposable element R2 (869 aa).

One can recognise a Reverse transcriptase domain in the interval 199 to 475 (IFVFYGRVPS…DLWKYLGVVY (277 aa)). Positions 601-869 (LYASISHSCK…FNNVTTVVHW (269 aa)) are nucleic acid-binding endonuclease.

The catalysed reaction is DNA(n) + a 2'-deoxyribonucleoside 5'-triphosphate = DNA(n+1) + diphosphate. This chain is Retrovirus-related Pol polyprotein from type-1 retrotransposable element R2, found in Bradysia coprophila (Dark-winged fungus gnat).